Consider the following 152-residue polypeptide: Small ribosomal subunit protein uS8m (152 aa).

The protein belongs to the universal ribosomal protein uS8 family.

Its subcellular location is the mitochondrion. This is Small ribosomal subunit protein uS8m (RPS8) from Marchantia polymorpha (Common liverwort).